A 250-amino-acid polypeptide reads, in one-letter code: Low affinity immunoglobulin gamma Fc region receptor III-A (250 aa).

Positions 1-16 (MWQLLPPAALLLLVSA) are cleaved as a signal peptide. The Extracellular segment spans residues 17–208 (DTQTADPSKA…VSSFFLPWHQ (192 aa)). Ig-like C2-type domains lie at 23–105 (PSKA…LEVH) and 99–189 (PVKL…VQIT). 2 disulfides stabilise this stretch: cysteine 47/cysteine 89 and cysteine 128/cysteine 172. N-linked (GlcNAc...) asparagine glycans are attached at residues asparagine 56 and asparagine 63. The N-linked (GlcNAc...) asparagine glycan is linked to asparagine 180. The helical transmembrane segment at 209–225 (ITFCLVMGVLFAVDTGL) threads the bilayer. Residues 226 to 250 (YFSVRRHLQSSEEWRDGKVTWSKGP) lie on the Cytoplasmic side of the membrane.

Forms a heterooligomeric complex with ITAM-containing signaling subunits FCER1G. Interacts (via transmembrane domain) with signaling subunits; this interaction is a prerequisite for receptor complex expression on the cell surface and intracellular signal transduction. Binds the Fc region of antigen-complexed IgG. Expressed in gamma-delta T cells.

It is found in the cell membrane. Receptor for the invariable Fc fragment of immunoglobulin gamma (IgG). Optimally activated upon binding of clustered antigen-IgG complexes displayed on cell surfaces, triggers lysis of antibody-coated cells, a process known as antibody-dependent cellular cytotoxicity (ADCC). Does not bind free monomeric IgG, thus avoiding inappropriate effector cell activation in the absence of antigenic trigger. Mediates IgG effector functions on natural killer (NK) cells. Binds antigen-IgG complexes generated upon infection and triggers NK cell-dependent cytokine production and degranulation to limit viral load and propagation. Fc-binding subunit that associates with FCER1G adapters to form functional signaling complexes. Following the engagement of antigen-IgG complexes, triggers phosphorylation of immunoreceptor tyrosine-based activation motif (ITAM)-containing adapter with subsequent activation of phosphatidylinositol 3-kinase signaling and sustained elevation of intracellular calcium that ultimately drive NK cell activation. Mediates enhanced ADCC in response to afucosylated IgGs. The sequence is that of Low affinity immunoglobulin gamma Fc region receptor III-A from Bos taurus (Bovine).